Here is a 119-residue protein sequence, read N- to C-terminus: Large ribosomal subunit protein bL20 (119 aa).

This sequence belongs to the bacterial ribosomal protein bL20 family.

In terms of biological role, binds directly to 23S ribosomal RNA and is necessary for the in vitro assembly process of the 50S ribosomal subunit. It is not involved in the protein synthesizing functions of that subunit. The sequence is that of Large ribosomal subunit protein bL20 from Alkaliphilus oremlandii (strain OhILAs) (Clostridium oremlandii (strain OhILAs)).